A 195-amino-acid chain; its full sequence is Replication restart protein PriC (195 aa).

The protein belongs to the PriC family. In terms of assembly, monomer. Component of the replication restart primosome, which is composed of PriA, PriB, PriC, DnaB and DnaT; DnaG primase associates transiently with this complex. Interacts with the C-terminus of SSB; this interaction is required to load the main replicative helicase onto substrate replication forks. Interacts with helicase DnaB alone and in the DnaB-DnaC complex, probably 1:1 binding with DnaB.

Functionally, involved in the restart of stalled replication forks, which reloads the DnaB replicative helicase on sites other than the origin of replication. Recognizes abandoned replication forks and remodels DNA single-stranded binding protein (SSB) on ssDNA to uncover a loading site for DnaB. There are several restart pathways, the PriA-PriC pathway is a minor restart pathway. Part of the minor PriC-Rep pathway for restart of stalled replication forks, which has a different substrate specificity than PriA. Part of the major restart pathway with PriA, PriB, DnaB, DnaT and DnaG primase. priB and priC have redundant roles in the cell. The sequence is that of Replication restart protein PriC from Haemophilus influenzae (strain ATCC 51907 / DSM 11121 / KW20 / Rd).